A 222-amino-acid polypeptide reads, in one-letter code: Translation initiation factor 6 (222 aa).

This sequence belongs to the eIF-6 family.

In terms of biological role, binds to the 50S ribosomal subunit and prevents its association with the 30S ribosomal subunit to form the 70S initiation complex. In Methanocorpusculum labreanum (strain ATCC 43576 / DSM 4855 / Z), this protein is Translation initiation factor 6.